Consider the following 258-residue polypeptide: tRNA pseudouridine synthase A (258 aa).

Asp-52 serves as the catalytic Nucleophile. Tyr-110 is a binding site for substrate.

It belongs to the tRNA pseudouridine synthase TruA family. In terms of assembly, homodimer.

The enzyme catalyses uridine(38/39/40) in tRNA = pseudouridine(38/39/40) in tRNA. Its function is as follows. Formation of pseudouridine at positions 38, 39 and 40 in the anticodon stem and loop of transfer RNAs. The chain is tRNA pseudouridine synthase A from Francisella tularensis subsp. tularensis (strain FSC 198).